A 186-amino-acid polypeptide reads, in one-letter code: Elongation factor P (186 aa).

Belongs to the elongation factor P family.

It localises to the cytoplasm. The protein operates within protein biosynthesis; polypeptide chain elongation. Involved in peptide bond synthesis. Stimulates efficient translation and peptide-bond synthesis on native or reconstituted 70S ribosomes in vitro. Probably functions indirectly by altering the affinity of the ribosome for aminoacyl-tRNA, thus increasing their reactivity as acceptors for peptidyl transferase. The sequence is that of Elongation factor P from Clostridium acetobutylicum (strain ATCC 824 / DSM 792 / JCM 1419 / IAM 19013 / LMG 5710 / NBRC 13948 / NRRL B-527 / VKM B-1787 / 2291 / W).